The primary structure comprises 380 residues: Probable peptidoglycan glycosyltransferase FtsW (380 aa).

10 helical membrane-spanning segments follow: residues 14–34, 52–72, 79–99, 112–131, 141–161, 162–182, 188–208, 268–288, 304–324, and 341–361; these read LLWCTLCLLLIGVTMVTSSSI, ILYLVILFFIFKIFLDVPISF, IILLISISTLLLVLIIGNSIH, MQPSELSKLAMFCYLSNYLS, FGGFLKPIIIISFPLILLLVE, PDLGTTIVILLTTLSLLFISG, FIPTILIIVVTTTVLIIKSPY, IIGEELGYIGACTILFMIFFI, IFFSGYFAFSIGLWLIFQTLI, and PLISYGGSSLIIVSIAIIILI.

This sequence belongs to the SEDS family. FtsW subfamily.

Its subcellular location is the cell membrane. The catalysed reaction is [GlcNAc-(1-&gt;4)-Mur2Ac(oyl-L-Ala-gamma-D-Glu-L-Lys-D-Ala-D-Ala)](n)-di-trans,octa-cis-undecaprenyl diphosphate + beta-D-GlcNAc-(1-&gt;4)-Mur2Ac(oyl-L-Ala-gamma-D-Glu-L-Lys-D-Ala-D-Ala)-di-trans,octa-cis-undecaprenyl diphosphate = [GlcNAc-(1-&gt;4)-Mur2Ac(oyl-L-Ala-gamma-D-Glu-L-Lys-D-Ala-D-Ala)](n+1)-di-trans,octa-cis-undecaprenyl diphosphate + di-trans,octa-cis-undecaprenyl diphosphate + H(+). The protein operates within cell wall biogenesis; peptidoglycan biosynthesis. In terms of biological role, peptidoglycan polymerase that is essential for cell division. The sequence is that of Probable peptidoglycan glycosyltransferase FtsW from Buchnera aphidicola subsp. Baizongia pistaciae (strain Bp).